The following is a 329-amino-acid chain: Transcription factor MYB2 (329 aa).

2 consecutive HTH myb-type domains span residues 17 to 69 (GGDL…LNYL) and 70 to 124 (RPDL…QKHA). 2 consecutive DNA-binding regions (H-T-H motif) follow at residues 45 to 69 (WNSLARSAGLKRTGKSCRLRWLNYL) and 97 to 120 (WSKIAQHLPGRTDNEIKNYWRTRV). Composition is skewed to low complexity over residues 155 to 166 (AAAGQQQQQEGG) and 217 to 235 (LSSTTAGSSSLSTDSGAGA). 2 disordered regions span residues 155 to 189 (AAAGQQQQQEGGTDTPPLSWQHGGSDGLYESPELP) and 206 to 242 (GAQSGGTPAPELSSTTAGSSSLSTDSGAGAQPSWPTQ).

Highly expressed in leaves. Expressed in roots and shoots. Expressed at low levels in flowers.

It is found in the nucleus. Its function is as follows. Transcription factor involved in abiotic stress responses. Plays a regulatory role in tolerance to salt, cold, and drought stresses. Positively regulates the expression of genes involved in proline synthesis and transport, and genes involved in reactive oxygen species (ROS) scavenging such as peroxidase, superoxide dismutase and catalase during salt stress. Transactivates stress-related genes, including LEA3, RAB16A and DREB2A during salt stress. The protein is Transcription factor MYB2 of Oryza sativa subsp. japonica (Rice).